We begin with the raw amino-acid sequence, 520 residues long: MENIEKLLMQEKILMLELDLVRAKISLARANGSSQQGDLPLHRETPEKEEAVHSALATFTPTQVKAIPEQTAPGKESTNPLMASILPKDMNPVQTGIRLAVPGDFLRPHQGIPIPQKSELSSTVAPLRAESGIQHPHINYYVVYNGPHAGIYDDWGCTKAATNGVPGVAHKKFATITEARAAADAYTTSTQTDRLNFIPKGEAQLKPKSFAEALTSPPKQKAHWLTLGTKRPSSDPAPKEISFAPEITMDDFLYLYHLGRKFDGEGDDTIFTTDNEKISLFNFRKNADPQMVREAYAAGLIKTIYPSNNLQEIKYLPKKVKDAVKRFRTNCIKNTEKDIFLKIRSTIPVWTIQGLVHKPRQVIEIGVSKKVVPTESKAMESKIQIEDLTELAVKTGGQFIQSLLRLNDKKKIFVNMVEHDTLVYSKNIKDTVSEDQRAIETFQQRVISGNLLGFHCPSICHFMERTVEKEGGSYKVHHCDKGKAIVQDASADSGPKDGPPPTRSIVEKEDVPTTSSKQVD.

Residues 486 to 520 (VQDASADSGPKDGPPPTRSIVEKEDVPTTSSKQVD) form a disordered region.

The protein belongs to the caulimoviridae viroplasmin family.

It is found in the host cytoplasm. Its function is as follows. Enhances the ribosomal termination-reinitiation event leading to the translation of major open reading frames on the polycistronic viral RNAs. This Cauliflower mosaic virus (strain NY8153) (CaMV) protein is Transactivator/viroplasmin protein.